A 466-amino-acid polypeptide reads, in one-letter code: Argininosuccinate lyase (466 aa).

It belongs to the lyase 1 family. Argininosuccinate lyase subfamily.

The protein localises to the cytoplasm. It carries out the reaction 2-(N(omega)-L-arginino)succinate = fumarate + L-arginine. It functions in the pathway amino-acid biosynthesis; L-arginine biosynthesis; L-arginine from L-ornithine and carbamoyl phosphate: step 3/3. The sequence is that of Argininosuccinate lyase from Microcystis aeruginosa (strain NIES-843 / IAM M-2473).